Consider the following 232-residue polypeptide: 2-C-methyl-D-erythritol 4-phosphate cytidylyltransferase (232 aa).

This sequence belongs to the IspD/TarI cytidylyltransferase family. IspD subfamily.

It catalyses the reaction 2-C-methyl-D-erythritol 4-phosphate + CTP + H(+) = 4-CDP-2-C-methyl-D-erythritol + diphosphate. It participates in isoprenoid biosynthesis; isopentenyl diphosphate biosynthesis via DXP pathway; isopentenyl diphosphate from 1-deoxy-D-xylulose 5-phosphate: step 2/6. In terms of biological role, catalyzes the formation of 4-diphosphocytidyl-2-C-methyl-D-erythritol from CTP and 2-C-methyl-D-erythritol 4-phosphate (MEP). This Rhodococcus erythropolis (strain PR4 / NBRC 100887) protein is 2-C-methyl-D-erythritol 4-phosphate cytidylyltransferase.